A 354-amino-acid polypeptide reads, in one-letter code: Uroporphyrinogen decarboxylase (354 aa).

Residues 27-31, aspartate 77, tyrosine 154, threonine 209, and histidine 327 each bind substrate; that span reads RQAGR.

It belongs to the uroporphyrinogen decarboxylase family. In terms of assembly, homodimer.

Its subcellular location is the cytoplasm. It carries out the reaction uroporphyrinogen III + 4 H(+) = coproporphyrinogen III + 4 CO2. The protein operates within porphyrin-containing compound metabolism; protoporphyrin-IX biosynthesis; coproporphyrinogen-III from 5-aminolevulinate: step 4/4. In terms of biological role, catalyzes the decarboxylation of four acetate groups of uroporphyrinogen-III to yield coproporphyrinogen-III. The sequence is that of Uroporphyrinogen decarboxylase from Escherichia coli (strain 55989 / EAEC).